We begin with the raw amino-acid sequence, 367 residues long: Probable butyrate kinase (367 aa).

This sequence belongs to the acetokinase family.

Its subcellular location is the cytoplasm. The catalysed reaction is butanoate + ATP = butanoyl phosphate + ADP. The sequence is that of Probable butyrate kinase from Bacillus cereus (strain ATCC 10987 / NRS 248).